Here is a 380-residue protein sequence, read N- to C-terminus: Tryptophan 2,3-dioxygenase (380 aa).

Residues 57–61 (FIITH) and arginine 128 contribute to the substrate site. Histidine 313 serves as a coordination point for heme. Threonine 328 is a binding site for substrate.

It belongs to the tryptophan 2,3-dioxygenase family. In terms of assembly, homotetramer. Dimer of dimers. Requires heme as cofactor.

It carries out the reaction L-tryptophan + O2 = N-formyl-L-kynurenine. The protein operates within amino-acid degradation; L-tryptophan degradation via kynurenine pathway; L-kynurenine from L-tryptophan: step 1/2. It participates in pigment biosynthesis; ommochrome biosynthesis. Heme-dependent dioxygenase that catalyzes the oxidative cleavage of the L-tryptophan (L-Trp) pyrrole ring and converts L-tryptophan to N-formyl-L-kynurenine. Catalyzes the oxidative cleavage of the indole moiety. The protein is Tryptophan 2,3-dioxygenase of Drosophila willistoni (Fruit fly).